The chain runs to 147 residues: Sec-independent protein translocase protein TatB (147 aa).

Residues 1-21 (MFDISFSEILVIAAVALIVIG) form a helical membrane-spanning segment. Residues 67 to 88 (EETGRSIENSVHTELDKFRETV) show a composition bias toward basic and acidic residues. The segment at 67-147 (EETGRSIENS…GVNRERETAE (81 aa)) is disordered. Residues 103 to 117 (APAGESSPPQNSSPA) show a composition bias toward low complexity.

The protein belongs to the TatB family. In terms of assembly, the Tat system comprises two distinct complexes: a TatABC complex, containing multiple copies of TatA, TatB and TatC subunits, and a separate TatA complex, containing only TatA subunits. Substrates initially bind to the TatABC complex, which probably triggers association of the separate TatA complex to form the active translocon.

The protein resides in the cell inner membrane. In terms of biological role, part of the twin-arginine translocation (Tat) system that transports large folded proteins containing a characteristic twin-arginine motif in their signal peptide across membranes. Together with TatC, TatB is part of a receptor directly interacting with Tat signal peptides. TatB may form an oligomeric binding site that transiently accommodates folded Tat precursor proteins before their translocation. This Nitrosospira multiformis (strain ATCC 25196 / NCIMB 11849 / C 71) protein is Sec-independent protein translocase protein TatB.